A 485-amino-acid chain; its full sequence is ATP synthase subunit beta (485 aa).

Position 170–177 (170–177 (GGAGVGKT)) interacts with ATP.

The protein belongs to the ATPase alpha/beta chains family. F-type ATPases have 2 components, CF(1) - the catalytic core - and CF(0) - the membrane proton channel. CF(1) has five subunits: alpha(3), beta(3), gamma(1), delta(1), epsilon(1). CF(0) has three main subunits: a(1), b(2) and c(9-12). The alpha and beta chains form an alternating ring which encloses part of the gamma chain. CF(1) is attached to CF(0) by a central stalk formed by the gamma and epsilon chains, while a peripheral stalk is formed by the delta and b chains.

It localises to the cell membrane. It catalyses the reaction ATP + H2O + 4 H(+)(in) = ADP + phosphate + 5 H(+)(out). Functionally, produces ATP from ADP in the presence of a proton gradient across the membrane. The catalytic sites are hosted primarily by the beta subunits. This chain is ATP synthase subunit beta, found in Salinispora arenicola (strain CNS-205).